Reading from the N-terminus, the 990-residue chain is Insulin-degrading enzyme (990 aa).

H81 is a Zn(2+) binding site. E84 (proton acceptor) is an active-site residue. 2 residues coordinate Zn(2+): H85 and E162.

It belongs to the peptidase M16 family. The cofactor is Zn(2+).

The catalysed reaction is Degradation of insulin, glucagon and other polypeptides. No action on proteins.. Its function is as follows. Can cleave insulin and TGF-alpha. The protein is Insulin-degrading enzyme (Ide) of Drosophila melanogaster (Fruit fly).